The sequence spans 348 residues: tRNA (cytosine(34)-C(5))-methyltransferase, mitochondrial (348 aa).

Residues 139–145, Glu-162, Asp-193, and Asp-211 contribute to the S-adenosyl-L-methionine site; that span reads CAAPGGK. Cys-265 (nucleophile) is an active-site residue.

It belongs to the class I-like SAM-binding methyltransferase superfamily. RsmB/NOP family.

Its subcellular location is the mitochondrion matrix. The enzyme catalyses cytidine(34) in mitochondrial tRNA + S-adenosyl-L-methionine = 5-methylcytidine(34) in mitochondrial tRNA + S-adenosyl-L-homocysteine + H(+). Functionally, mitochondrial tRNA methyltransferase that mediates methylation of cytosine to 5-methylcytosine (m5C) at position 34 of mt-tRNA(Met). mt-tRNA(Met) methylation at cytosine(34) takes place at the wobble position of the anticodon and initiates the formation of 5-formylcytosine (f(5)c) at this position. mt-tRNA(Met) containing the f(5)c modification at the wobble position enables recognition of the AUA codon in addition to the AUG codon, expanding codon recognition in mitochondrial translation. This chain is tRNA (cytosine(34)-C(5))-methyltransferase, mitochondrial, found in Mus musculus (Mouse).